We begin with the raw amino-acid sequence, 269 residues long: 4-hydroxy-tetrahydrodipicolinate reductase (269 aa).

Residues 13–18 and aspartate 39 each bind NAD(+); that span reads GASGRM. Arginine 40 contributes to the NADP(+) binding site. Residues 101–103 and 125–128 each bind NAD(+); these read GTT and APNM. Residue histidine 158 is the Proton donor/acceptor of the active site. Histidine 159 provides a ligand contact to (S)-2,3,4,5-tetrahydrodipicolinate. Lysine 162 functions as the Proton donor in the catalytic mechanism. 168-169 lines the (S)-2,3,4,5-tetrahydrodipicolinate pocket; sequence GT.

The protein belongs to the DapB family.

It is found in the cytoplasm. It carries out the reaction (S)-2,3,4,5-tetrahydrodipicolinate + NAD(+) + H2O = (2S,4S)-4-hydroxy-2,3,4,5-tetrahydrodipicolinate + NADH + H(+). The enzyme catalyses (S)-2,3,4,5-tetrahydrodipicolinate + NADP(+) + H2O = (2S,4S)-4-hydroxy-2,3,4,5-tetrahydrodipicolinate + NADPH + H(+). It functions in the pathway amino-acid biosynthesis; L-lysine biosynthesis via DAP pathway; (S)-tetrahydrodipicolinate from L-aspartate: step 4/4. Functionally, catalyzes the conversion of 4-hydroxy-tetrahydrodipicolinate (HTPA) to tetrahydrodipicolinate. The sequence is that of 4-hydroxy-tetrahydrodipicolinate reductase from Bordetella pertussis (strain Tohama I / ATCC BAA-589 / NCTC 13251).